Here is a 623-residue protein sequence, read N- to C-terminus: UvrABC system protein C (623 aa).

Residues Asp-13–Ile-92 form the GIY-YIG domain. Residues Asn-204–Val-239 enclose the UVR domain.

This sequence belongs to the UvrC family. As to quaternary structure, interacts with UvrB in an incision complex.

The protein resides in the cytoplasm. The UvrABC repair system catalyzes the recognition and processing of DNA lesions. UvrC both incises the 5' and 3' sides of the lesion. The N-terminal half is responsible for the 3' incision and the C-terminal half is responsible for the 5' incision. This Clostridium acetobutylicum (strain ATCC 824 / DSM 792 / JCM 1419 / IAM 19013 / LMG 5710 / NBRC 13948 / NRRL B-527 / VKM B-1787 / 2291 / W) protein is UvrABC system protein C.